The primary structure comprises 641 residues: Epsin-2 (641 aa).

A 1,2-diacyl-sn-glycero-3-phospho-(1D-myo-inositol-4,5-bisphosphate) contacts are provided by arginine 8, lysine 11, arginine 25, asparagine 30, arginine 63, and histidine 73. Residues asparagine 12–arginine 144 form the ENTH domain. Phosphoserine occurs at positions 153 and 156. Residues serine 163–histidine 181 are compositionally biased toward polar residues. Disordered stretches follow at residues serine 163–leucine 214 and arginine 255–glutamate 275. Residue arginine 170 is modified to Omega-N-methylarginine. Phosphoserine occurs at positions 173, 192, and 195. Positions proline 259 to serine 273 are enriched in polar residues. UIM domains are found at residues glutamate 275–glutamate 294 and glycine 300–isoleucine 319. The tract at residues alanine 340 to alanine 425 is disordered. Tandem repeats lie at residues glutamate 352–tryptophan 354, asparagine 364–tryptophan 366, aspartate 377–tryptophan 379, aspartate 391–tryptophan 393, aspartate 409–tryptophan 411, and aspartate 427–tryptophan 429. Residues glutamate 352 to phenylalanine 639 form a 6 X 3 AA repeats of [DE]-P-W region. The span at serine 408–alanine 421 shows a compositional bias: low complexity. The interval threonine 470–phenylalanine 512 is disordered. Positions glutamate 472 to arginine 506 are enriched in polar residues. The residue at position 486 (serine 486) is a Phosphoserine. Phosphothreonine is present on threonine 508. A run of 2 repeats spans residues asparagine 537–phenylalanine 539 and asparagine 552–phenylalanine 554. The segment at asparagine 537 to phenylalanine 639 is 3 X 3 AA repeats of N-P-F. Serine 570 is subject to Phosphoserine. Residues asparagine 637 to phenylalanine 639 form repeat 3.

The protein belongs to the epsin family. In terms of assembly, binds EPS15. Interacts with ITSN1. Binds AP-2 and clathrin. Interacts with UBQLN2. Ubiquitinated. Highest expression is found in brain. Detected at lower levels in lung and liver.

It is found in the cytoplasm. It localises to the cytoplasmic vesicle. The protein resides in the clathrin-coated vesicle. Plays a role in the formation of clathrin-coated invaginations and endocytosis. In Homo sapiens (Human), this protein is Epsin-2 (EPN2).